We begin with the raw amino-acid sequence, 147 residues long: MKVLLIKDVKALGKAGEVKEVKDGYGQNFLIAKGFAKAATNEVLKKYESDKKKEAENLRFEIANLEKLKEELSKITLEISKPVGANGSLFGGVTKDEIAHALKEQSHIEIDKKSLECDTFKSLGLHEVSVKLGHAIHAKFNINIKAE.

Belongs to the bacterial ribosomal protein bL9 family.

Its function is as follows. Binds to the 23S rRNA. In Campylobacter jejuni subsp. jejuni serotype O:23/36 (strain 81-176), this protein is Large ribosomal subunit protein bL9.